The chain runs to 152 residues: Probable flagellum biosynthesis repressor protein FlbT (152 aa).

The protein belongs to the FlbT family.

In terms of biological role, has a post-transcriptional repressor function in flagellum biogenesis. Associates with the 5'-UTR of fljK mRNA and promotes its degradation. This Brucella anthropi (strain ATCC 49188 / DSM 6882 / CCUG 24695 / JCM 21032 / LMG 3331 / NBRC 15819 / NCTC 12168 / Alc 37) (Ochrobactrum anthropi) protein is Probable flagellum biosynthesis repressor protein FlbT.